The sequence spans 112 residues: Nucleoid-associated protein BCI_0116 (112 aa).

This sequence belongs to the YbaB/EbfC family. Homodimer.

Its subcellular location is the cytoplasm. The protein resides in the nucleoid. In terms of biological role, binds to DNA and alters its conformation. May be involved in regulation of gene expression, nucleoid organization and DNA protection. This chain is Nucleoid-associated protein BCI_0116, found in Baumannia cicadellinicola subsp. Homalodisca coagulata.